A 757-amino-acid polypeptide reads, in one-letter code: Receptor protein kinase-like protein At4g34220 (757 aa).

The signal sequence occupies residues 1 to 26 (MTSNRSNLLFSLVLFHFLFVPTQLQA). 7 LRR repeats span residues 104–126 (YLRI…VFNA), 128–150 (ELQS…VNSV), 152–174 (NLQL…ISLL), 176–198 (NLTV…FEAA), 199–219 (QILD…LGGK), 220–242 (SLHY…FAEK), and 245–267 (ANAT…LSLL). The chain crosses the membrane as a helical span at residues 339–359 (IAAITVADIVGLAFIGLLVLY). The Protein kinase domain occupies 471-753 (KASAYILGTT…KELVQVLEKI (283 aa)). S473 bears the Phosphoserine mark. T494 bears the Phosphothreonine mark. S553 carries the post-translational modification Phosphoserine. Residues 633 to 654 (ARESHTTGPTSSSPYQPPEWST) are disordered. Residues T638 and T639 each carry the phosphothreonine modification. A compositionally biased stretch (polar residues) spans 638–654 (TTGPTSSSPYQPPEWST).

It belongs to the protein kinase superfamily.

The protein resides in the membrane. The sequence is that of Receptor protein kinase-like protein At4g34220 from Arabidopsis thaliana (Mouse-ear cress).